Reading from the N-terminus, the 106-residue chain is Oncosphere antigen B (106 aa).

The Fibronectin type-III domain maps to 11 to 106 (LPQHFRWSQV…QSELRSMCIK (96 aa)).

The chain is Oncosphere antigen B (ONCB) from Hydatigena taeniaeformis (Feline tapeworm).